A 217-amino-acid polypeptide reads, in one-letter code: Uracil-DNA glycosylase (217 aa).

Asp-62 functions as the Proton acceptor in the catalytic mechanism.

It belongs to the uracil-DNA glycosylase (UDG) superfamily. UNG family.

It localises to the cytoplasm. The enzyme catalyses Hydrolyzes single-stranded DNA or mismatched double-stranded DNA and polynucleotides, releasing free uracil.. Excises uracil residues from the DNA which can arise as a result of misincorporation of dUMP residues by DNA polymerase or due to deamination of cytosine. This Streptococcus pyogenes serotype M4 (strain MGAS10750) protein is Uracil-DNA glycosylase.